The primary structure comprises 269 residues: Eukaryotic translation initiation factor 3 subunit G-1 (269 aa).

Residues Ala-188–Pro-266 enclose the RRM domain.

This sequence belongs to the eIF-3 subunit G family. In terms of assembly, component of the eukaryotic translation initiation factor 3 (eIF-3) complex. The eIF-3 complex interacts with pix.

It localises to the cytoplasm. RNA-binding component of the eukaryotic translation initiation factor 3 (eIF-3) complex, which is involved in protein synthesis of a specialized repertoire of mRNAs and, together with other initiation factors, stimulates binding of mRNA and methionyl-tRNAi to the 40S ribosome. The eIF-3 complex specifically targets and initiates translation of a subset of mRNAs involved in cell proliferation. This subunit can bind 18S rRNA. In Drosophila sechellia (Fruit fly), this protein is Eukaryotic translation initiation factor 3 subunit G-1.